Consider the following 225-residue polypeptide: Acidic leucine-rich nuclear phosphoprotein 32-related protein 2 (225 aa).

LRR repeat units follow at residues 39–60 (KLELLSMVKCGLTTLKGMPVLP), 61–82 (ALNYLDLSDNELGDDASFDVLI), and 87–107 (EIKKITLSGNRLTLDNVRTLK). The 41-residue stretch at 121–161 (SSLGLLDDYRVKMFEMIPSLKILDGCDVDGEEVEEEFAAGE) folds into the LRRCT domain. Residues 155–175 (EEFAAGEGAEDSDEGDSDEDG) are compositionally biased toward acidic residues. Positions 155 to 225 (EEFAAGEGAE…DEPEAKKSAE (71 aa)) are disordered.

The protein belongs to the ANP32 family.

The protein is Acidic leucine-rich nuclear phosphoprotein 32-related protein 2 of Caenorhabditis elegans.